A 193-amino-acid chain; its full sequence is Ribonuclease HII (193 aa).

In terms of domain architecture, RNase H type-2 spans 15–193 (CIVAGIDEAG…PYHRRSFRCC (179 aa)). 3 residues coordinate a divalent metal cation: Asp21, Glu22, and Asp112.

This sequence belongs to the RNase HII family. Mn(2+) serves as cofactor. The cofactor is Mg(2+).

The protein resides in the cytoplasm. The enzyme catalyses Endonucleolytic cleavage to 5'-phosphomonoester.. In terms of biological role, endonuclease that specifically degrades the RNA of RNA-DNA hybrids. The polypeptide is Ribonuclease HII (Rickettsia africae (strain ESF-5)).